We begin with the raw amino-acid sequence, 257 residues long: Thiazole synthase (257 aa).

Lysine 98 acts as the Schiff-base intermediate with DXP in catalysis. 1-deoxy-D-xylulose 5-phosphate-binding positions include glycine 159, 185-186 (AG), and 207-208 (NT).

This sequence belongs to the ThiG family. Homotetramer. Forms heterodimers with either ThiH or ThiS.

It localises to the cytoplasm. It carries out the reaction [ThiS sulfur-carrier protein]-C-terminal-Gly-aminoethanethioate + 2-iminoacetate + 1-deoxy-D-xylulose 5-phosphate = [ThiS sulfur-carrier protein]-C-terminal Gly-Gly + 2-[(2R,5Z)-2-carboxy-4-methylthiazol-5(2H)-ylidene]ethyl phosphate + 2 H2O + H(+). It functions in the pathway cofactor biosynthesis; thiamine diphosphate biosynthesis. In terms of biological role, catalyzes the rearrangement of 1-deoxy-D-xylulose 5-phosphate (DXP) to produce the thiazole phosphate moiety of thiamine. Sulfur is provided by the thiocarboxylate moiety of the carrier protein ThiS. In vitro, sulfur can be provided by H(2)S. The sequence is that of Thiazole synthase from Anaeromyxobacter dehalogenans (strain 2CP-C).